A 1438-amino-acid polypeptide reads, in one-letter code: DNA polymerase III PolC-type (1438 aa).

The Exonuclease domain occupies 422 to 578 (YVVFDVETTG…YDTEATAYIF (157 aa)).

Belongs to the DNA polymerase type-C family. PolC subfamily.

The protein resides in the cytoplasm. It carries out the reaction DNA(n) + a 2'-deoxyribonucleoside 5'-triphosphate = DNA(n+1) + diphosphate. In terms of biological role, required for replicative DNA synthesis. This DNA polymerase also exhibits 3' to 5' exonuclease activity. The protein is DNA polymerase III PolC-type of Staphylococcus aureus (strain Mu3 / ATCC 700698).